The following is a 795-amino-acid chain: Phenylalanine--tRNA ligase beta subunit (795 aa).

In terms of domain architecture, tRNA-binding spans 39 to 148 (AGTFNGVKVG…IDAPIGMDFR (110 aa)). A B5 domain is found at 401–476 (PKPNKVALRR…RIYGYDNIPN (76 aa)). Mg(2+)-binding residues include aspartate 454, aspartate 460, glutamate 463, and glutamate 464. An FDX-ACB domain is found at 701–794 (SKFPANRRDI…VSEKFGASLR (94 aa)).

This sequence belongs to the phenylalanyl-tRNA synthetase beta subunit family. Type 1 subfamily. In terms of assembly, tetramer of two alpha and two beta subunits. The cofactor is Mg(2+).

Its subcellular location is the cytoplasm. It catalyses the reaction tRNA(Phe) + L-phenylalanine + ATP = L-phenylalanyl-tRNA(Phe) + AMP + diphosphate + H(+). This is Phenylalanine--tRNA ligase beta subunit from Vibrio vulnificus (strain CMCP6).